A 388-amino-acid polypeptide reads, in one-letter code: Succinate--CoA ligase [ADP-forming] subunit beta (388 aa).

Residues 9–244 (KQLFAEYGLP…PSQEDEREAH (236 aa)) enclose the ATP-grasp domain. ATP is bound by residues Lys-46, 53 to 55 (GRG), Glu-99, Thr-102, and Glu-107. The Mg(2+) site is built by Asn-199 and Asp-213. Substrate contacts are provided by residues Asn-264 and 321–323 (GIV).

This sequence belongs to the succinate/malate CoA ligase beta subunit family. In terms of assembly, heterotetramer of two alpha and two beta subunits. It depends on Mg(2+) as a cofactor.

It catalyses the reaction succinate + ATP + CoA = succinyl-CoA + ADP + phosphate. It carries out the reaction GTP + succinate + CoA = succinyl-CoA + GDP + phosphate. It functions in the pathway carbohydrate metabolism; tricarboxylic acid cycle; succinate from succinyl-CoA (ligase route): step 1/1. Succinyl-CoA synthetase functions in the citric acid cycle (TCA), coupling the hydrolysis of succinyl-CoA to the synthesis of either ATP or GTP and thus represents the only step of substrate-level phosphorylation in the TCA. The beta subunit provides nucleotide specificity of the enzyme and binds the substrate succinate, while the binding sites for coenzyme A and phosphate are found in the alpha subunit. The protein is Succinate--CoA ligase [ADP-forming] subunit beta of Colwellia psychrerythraea (strain 34H / ATCC BAA-681) (Vibrio psychroerythus).